A 331-amino-acid polypeptide reads, in one-letter code: MNYQALPKIDLHCHLDGSVRPQTIIDLANQQNVTIPSQDINEISSLMIAPETCQNLEEYLMRFELPLSVMQTEEGIERISFELFEDAAKENVKYFEVRFGPQLHQLQGLSFDQIISSAVKGMQRAEAMYDIKGNYILSILRTMDKGNINDVIDAGAAYLNKGVVAFDLAGAELPGFCHEFIPYVNYAIEKGYRITIHAGEQGVGQNVFDAVSLLGAERVGHGIHIKGHQGAYDLVKEKSVALETCPSSNIQTKAVDVLSNHPIKAFYQGGVLITINTDNRTVSNTTMTDEVRKVMEEFNLSREDYFAIYRVSVEQSFASDEVKQELLKLAE.

Zn(2+) is bound by residues His-12 and His-14. The substrate site is built by His-14, Asp-16, and Gly-170. His-197 serves as a coordination point for Zn(2+). Glu-200 (proton donor) is an active-site residue. A Zn(2+)-binding site is contributed by Asp-278.

This sequence belongs to the metallo-dependent hydrolases superfamily. Adenosine and AMP deaminases family. Adenosine deaminase subfamily. Zn(2+) is required as a cofactor.

The catalysed reaction is adenosine + H2O + H(+) = inosine + NH4(+). It catalyses the reaction 2'-deoxyadenosine + H2O + H(+) = 2'-deoxyinosine + NH4(+). In terms of biological role, catalyzes the hydrolytic deamination of adenosine and 2-deoxyadenosine. The protein is Adenosine deaminase of Shewanella woodyi (strain ATCC 51908 / MS32).